A 511-amino-acid chain; its full sequence is Coatomer subunit delta (511 aa).

Positions 167-177 are enriched in basic and acidic residues; that stretch reads QQARRDAERQG. Residues 167 to 188 are disordered; that stretch reads QQARRDAERQGKKAPGFGGFGS. Ser-223 is modified (phosphoserine). An N6-acetyllysine mark is found at Lys-233 and Lys-241. The residue at position 244 (Ser-244) is a Phosphoserine. Positions 271–511 constitute an MHD domain; the sequence is MESVHMKIEE…TFLVDKYEIL (241 aa). N6-acetyllysine occurs at positions 309 and 351. At Ser-493 the chain carries Phosphoserine.

This sequence belongs to the adaptor complexes medium subunit family. Delta-COP subfamily. Oligomeric complex that consists of at least the alpha, beta, beta', gamma, delta, epsilon and zeta subunits.

The protein resides in the cytoplasm. It is found in the golgi apparatus membrane. The protein localises to the cytoplasmic vesicle. Its subcellular location is the COPI-coated vesicle membrane. Functionally, the coatomer is a cytosolic protein complex that binds to dilysine motifs and reversibly associates with Golgi non-clathrin-coated vesicles, which further mediate biosynthetic protein transport from the ER, via the Golgi up to the trans Golgi network. Coatomer complex is required for budding from Golgi membranes, and is essential for the retrograde Golgi-to-ER transport of dilysine-tagged proteins. In mammals, the coatomer can only be recruited by membranes associated to ADP-ribosylation factors (ARFs), which are small GTP-binding proteins; the complex also influences the Golgi structural integrity, as well as the processing, activity, and endocytic recycling of LDL receptors. This is Coatomer subunit delta (ARCN1) from Pongo abelii (Sumatran orangutan).